We begin with the raw amino-acid sequence, 169 residues long: Large ribosomal subunit protein uL10 (169 aa).

The protein belongs to the universal ribosomal protein uL10 family. As to quaternary structure, part of the ribosomal stalk of the 50S ribosomal subunit. The N-terminus interacts with L11 and the large rRNA to form the base of the stalk. The C-terminus forms an elongated spine to which L12 dimers bind in a sequential fashion forming a multimeric L10(L12)X complex.

Functionally, forms part of the ribosomal stalk, playing a central role in the interaction of the ribosome with GTP-bound translation factors. In Rickettsia bellii (strain OSU 85-389), this protein is Large ribosomal subunit protein uL10.